We begin with the raw amino-acid sequence, 426 residues long: Glutamate-1-semialdehyde 2,1-aminomutase (426 aa).

An N6-(pyridoxal phosphate)lysine modification is found at Lys265.

Belongs to the class-III pyridoxal-phosphate-dependent aminotransferase family. HemL subfamily. Homodimer. Pyridoxal 5'-phosphate is required as a cofactor.

Its subcellular location is the cytoplasm. The catalysed reaction is (S)-4-amino-5-oxopentanoate = 5-aminolevulinate. Its pathway is porphyrin-containing compound metabolism; protoporphyrin-IX biosynthesis; 5-aminolevulinate from L-glutamyl-tRNA(Glu): step 2/2. The sequence is that of Glutamate-1-semialdehyde 2,1-aminomutase from Salmonella newport (strain SL254).